The chain runs to 882 residues: Alanine--tRNA ligase (882 aa).

The Zn(2+) site is built by histidine 576, histidine 580, cysteine 678, and histidine 682.

The protein belongs to the class-II aminoacyl-tRNA synthetase family. Zn(2+) serves as cofactor.

The protein resides in the cytoplasm. It catalyses the reaction tRNA(Ala) + L-alanine + ATP = L-alanyl-tRNA(Ala) + AMP + diphosphate. Its function is as follows. Catalyzes the attachment of alanine to tRNA(Ala) in a two-step reaction: alanine is first activated by ATP to form Ala-AMP and then transferred to the acceptor end of tRNA(Ala). Also edits incorrectly charged Ser-tRNA(Ala) and Gly-tRNA(Ala) via its editing domain. In Anaplasma marginale (strain St. Maries), this protein is Alanine--tRNA ligase.